Here is a 319-residue protein sequence, read N- to C-terminus: Cytochrome f (319 aa).

An N-terminal signal peptide occupies residues 1-35 (METRNIFSWIKEQITRSISVSLMIYIITRTAVSNA). The heme site is built by Tyr36, Cys56, Cys59, and His60. A helical membrane pass occupies residues 285–305 (VQGLLFFLASVILAQIFLVLK).

This sequence belongs to the cytochrome f family. In terms of assembly, the 4 large subunits of the cytochrome b6-f complex are cytochrome b6, subunit IV (17 kDa polypeptide, petD), cytochrome f and the Rieske protein, while the 4 small subunits are PetG, PetL, PetM and PetN. The complex functions as a dimer. Heme serves as cofactor.

The protein localises to the plastid. The protein resides in the chloroplast thylakoid membrane. Its function is as follows. Component of the cytochrome b6-f complex, which mediates electron transfer between photosystem II (PSII) and photosystem I (PSI), cyclic electron flow around PSI, and state transitions. The polypeptide is Cytochrome f (Coffea arabica (Arabian coffee)).